We begin with the raw amino-acid sequence, 185 residues long: Ribosome-recycling factor (185 aa).

Belongs to the RRF family.

Its subcellular location is the cytoplasm. Functionally, responsible for the release of ribosomes from messenger RNA at the termination of protein biosynthesis. May increase the efficiency of translation by recycling ribosomes from one round of translation to another. The sequence is that of Ribosome-recycling factor from Kocuria rhizophila (strain ATCC 9341 / DSM 348 / NBRC 103217 / DC2201).